A 154-amino-acid polypeptide reads, in one-letter code: Methylglyoxal synthase (154 aa).

An MGS-like domain is found at 1–154; sequence MELTTRTIAA…RYMQQRLDLK (154 aa). Substrate contacts are provided by residues H19, K23, 45 to 48, and 65 to 66; these read TGTT and SG. D71 (proton donor/acceptor) is an active-site residue. H98 lines the substrate pocket.

It belongs to the methylglyoxal synthase family.

The catalysed reaction is dihydroxyacetone phosphate = methylglyoxal + phosphate. In terms of biological role, catalyzes the formation of methylglyoxal from dihydroxyacetone phosphate. The polypeptide is Methylglyoxal synthase (Yersinia pseudotuberculosis serotype O:1b (strain IP 31758)).